The primary structure comprises 71 residues: uncharacterized protein (71 aa).

Residues glycine 12 to threonine 34 traverse the membrane as a helical segment.

Its subcellular location is the membrane. This is an uncharacterized protein from Dictyostelium discoideum (Social amoeba).